Here is a 506-residue protein sequence, read N- to C-terminus: ATP synthase subunit alpha (506 aa).

169 to 176 (GDRQTGKT) is a binding site for ATP.

Belongs to the ATPase alpha/beta chains family. In terms of assembly, F-type ATPases have 2 components, CF(1) - the catalytic core - and CF(0) - the membrane proton channel. CF(1) has five subunits: alpha(3), beta(3), gamma(1), delta(1), epsilon(1). CF(0) has three main subunits: a(1), b(2) and c(9-12). The alpha and beta chains form an alternating ring which encloses part of the gamma chain. CF(1) is attached to CF(0) by a central stalk formed by the gamma and epsilon chains, while a peripheral stalk is formed by the delta and b chains.

It is found in the cell membrane. It carries out the reaction ATP + H2O + 4 H(+)(in) = ADP + phosphate + 5 H(+)(out). Produces ATP from ADP in the presence of a proton gradient across the membrane. The alpha chain is a regulatory subunit. The sequence is that of ATP synthase subunit alpha from Acetivibrio thermocellus (strain ATCC 27405 / DSM 1237 / JCM 9322 / NBRC 103400 / NCIMB 10682 / NRRL B-4536 / VPI 7372) (Clostridium thermocellum).